We begin with the raw amino-acid sequence, 352 residues long: Nicotinate-nucleotide--dimethylbenzimidazole phosphoribosyltransferase (352 aa).

Catalysis depends on Glu-316, which acts as the Proton acceptor.

Belongs to the CobT family.

The enzyme catalyses 5,6-dimethylbenzimidazole + nicotinate beta-D-ribonucleotide = alpha-ribazole 5'-phosphate + nicotinate + H(+). Its pathway is nucleoside biosynthesis; alpha-ribazole biosynthesis; alpha-ribazole from 5,6-dimethylbenzimidazole: step 1/2. Its function is as follows. Catalyzes the synthesis of alpha-ribazole-5'-phosphate from nicotinate mononucleotide (NAMN) and 5,6-dimethylbenzimidazole (DMB). The chain is Nicotinate-nucleotide--dimethylbenzimidazole phosphoribosyltransferase from Yersinia enterocolitica serotype O:8 / biotype 1B (strain NCTC 13174 / 8081).